The sequence spans 341 residues: MTDFKTIIARLAEGRALDAAEARAAFEIVMSGEATQAQIGAFLMGLRVRGETVAEITAGATVMRERALRVTAPANAIDIVGTGGDGVGTWNISTATALVVAAAGVPVAKHGNRKASSLSGTADALQALGVNLDIDPATIAASIEKAGIGFMFAQAHHAAMKHVAPVRADLGIKTIFNMLGPLSNPALVKRQLLGVFAAEWVKPFAEALRNLGSDSAWVVHGSDGMDELTTTGPSAVAELKGGSIRVFEVTPEDAGLPRASIEDLKGGDPEQNAAAIRRLLDGEAGAYRDIVLLNTAAALIVSGKAATLKEGAGLAAKAIDSGAAKQTLAKLVAATNGKNNV.

5-phospho-alpha-D-ribose 1-diphosphate is bound by residues G81, 84-85 (GD), T89, 91-94 (NIST), 109-117 (KHGNRKASS), and T121. Position 81 (G81) interacts with anthranilate. A Mg(2+)-binding site is contributed by S93. N112 is a binding site for anthranilate. R167 serves as a coordination point for anthranilate. The Mg(2+) site is built by D226 and E227.

This sequence belongs to the anthranilate phosphoribosyltransferase family. As to quaternary structure, homodimer. It depends on Mg(2+) as a cofactor.

It carries out the reaction N-(5-phospho-beta-D-ribosyl)anthranilate + diphosphate = 5-phospho-alpha-D-ribose 1-diphosphate + anthranilate. It participates in amino-acid biosynthesis; L-tryptophan biosynthesis; L-tryptophan from chorismate: step 2/5. Catalyzes the transfer of the phosphoribosyl group of 5-phosphorylribose-1-pyrophosphate (PRPP) to anthranilate to yield N-(5'-phosphoribosyl)-anthranilate (PRA). The sequence is that of Anthranilate phosphoribosyltransferase from Parvibaculum lavamentivorans (strain DS-1 / DSM 13023 / NCIMB 13966).